Reading from the N-terminus, the 268-residue chain is Hydroxyethylthiazole kinase (268 aa).

Met-45 contributes to the substrate binding site. 2 residues coordinate ATP: Arg-121 and Thr-167. Gly-194 provides a ligand contact to substrate.

Belongs to the Thz kinase family. Mg(2+) is required as a cofactor.

The catalysed reaction is 5-(2-hydroxyethyl)-4-methylthiazole + ATP = 4-methyl-5-(2-phosphooxyethyl)-thiazole + ADP + H(+). It functions in the pathway cofactor biosynthesis; thiamine diphosphate biosynthesis; 4-methyl-5-(2-phosphoethyl)-thiazole from 5-(2-hydroxyethyl)-4-methylthiazole: step 1/1. Functionally, catalyzes the phosphorylation of the hydroxyl group of 4-methyl-5-beta-hydroxyethylthiazole (THZ). The polypeptide is Hydroxyethylthiazole kinase (Bacillus thuringiensis (strain Al Hakam)).